The chain runs to 469 residues: Trehalose-6-phosphate synthase (469 aa).

A D-glucose 6-phosphate-binding site is contributed by R10. 22–23 (GG) is a UDP-alpha-D-glucose binding site. Positions 77 and 131 each coordinate D-glucose 6-phosphate. Residues R262 and K267 each contribute to the UDP-alpha-D-glucose site. R300 is a binding site for D-glucose 6-phosphate. Position 365-369 (365-369 (LVAKE)) interacts with UDP-alpha-D-glucose.

The protein belongs to the glycosyltransferase 20 family. Homotetramer.

The enzyme catalyses D-glucose 6-phosphate + UDP-alpha-D-glucose = alpha,alpha-trehalose 6-phosphate + UDP + H(+). It participates in glycan biosynthesis; trehalose biosynthesis. In terms of biological role, probably involved in the osmoprotection via the biosynthesis of trehalose. Catalyzes the transfer of glucose from UDP-alpha-D-glucose (UDP-Glc) to D-glucose 6-phosphate (Glc-6-P) to form trehalose-6-phosphate. Acts with retention of the anomeric configuration of the UDP-sugar donor. The chain is Trehalose-6-phosphate synthase from Sodalis glossinidius (strain morsitans).